The primary structure comprises 417 residues: WD repeat and FYVE domain-containing protein 2 (417 aa).

4 WD repeats span residues 29-68 (GHVA…QFWP), 119-157 (CHAG…NKVG), 202-241 (AHTN…GEAY), and 245-284 (GHNG…VETP). The FYVE-type zinc finger occupies 286 to 357 (WKTSDCCQKC…ICNDCAGRMK (72 aa)). Residues cysteine 292, cysteine 295, cysteine 319, cysteine 322, cysteine 327, cysteine 330, cysteine 349, and cysteine 352 each coordinate Zn(2+). A WD 5 repeat occupies 373 to 412 (EIRTGITAMHLQETLGLLVTSGQNRVVMIWDVRSVCSAPS).

Functionally, plays a role in coelomocyte endocytosis. The chain is WD repeat and FYVE domain-containing protein 2 from Caenorhabditis briggsae.